The chain runs to 1118 residues: Protein translocase subunit SecA (1118 aa).

ATP is bound by residues Gln-176, 194 to 198 (GEGKT), and Asp-693. Residues 1034–1056 (QQPVQQPKYRETKDEAGSAFGGG) are disordered.

This sequence belongs to the SecA family. As to quaternary structure, monomer and homodimer. Part of the essential Sec protein translocation apparatus which comprises SecA, SecYEG and auxiliary proteins SecDF. Other proteins may also be involved.

The protein resides in the cell inner membrane. Its subcellular location is the cytoplasm. It carries out the reaction ATP + H2O + cellular proteinSide 1 = ADP + phosphate + cellular proteinSide 2.. Part of the Sec protein translocase complex. Interacts with the SecYEG preprotein conducting channel. Has a central role in coupling the hydrolysis of ATP to the transfer of proteins into and across the cell membrane, serving as an ATP-driven molecular motor driving the stepwise translocation of polypeptide chains across the membrane. This Cytophaga hutchinsonii (strain ATCC 33406 / DSM 1761 / CIP 103989 / NBRC 15051 / NCIMB 9469 / D465) protein is Protein translocase subunit SecA.